Consider the following 394-residue polypeptide: MKTQVAIIGAGPSGLLLGQLLHKAGIDNVILERQTPDYVLGRIRAGVLEQGMVDLLREAGVDRRMARDGLVHEGVEIAFAGQRRRIDLKRLSGGKTVTVYGQTEVTRDLMEAREACGATTVYQAAEVRLHDLQGERPYVTFERDGERLRLDCDYIAGCDGFHGISRQSIPAERLKVFERVYPFGWLGLLADTPPVSHELIYANHPRGFALCSQRSATRSRYYVQVPLTEKVEDWSDERFWTELKARLPAEVAEKLVTGPSLEKSIAPLRSFVVEPMQHGRLFLAGDAAHIVPPTGAKGLNLAASDVSTLYRLLLKAYREGRGELLERYSAICLRRIWKAERFSWWMTSVLHRFPDTDAFSQRIQQTELEYYLGSEAGLATIAENYVGLPYEEIE.

FAD contacts are provided by residues S13, E32, 42–47 (RIRAGV), and Q102. Substrate-binding positions include Y201, 212–214 (SQR), and Y222. D286 is an FAD binding site. P293 is a substrate binding site. Residue 299 to 300 (LN) participates in FAD binding.

It belongs to the aromatic-ring hydroxylase family. Homodimer. The cofactor is FAD.

The catalysed reaction is 4-hydroxybenzoate + NADPH + O2 + H(+) = 3,4-dihydroxybenzoate + NADP(+) + H2O. It participates in aromatic compound metabolism; benzoate degradation via hydroxylation; 3,4-dihydroxybenzoate from benzoate: step 2/2. Functionally, catalyzes the incorporation of an atom of dioxygen into p-hydroxybenzoate (p-OHB) to form 3,4-dihydroxybenzoate (3,4DOHB). The reaction occurs in two parts: reduction of the flavin adenine dinucleotide (FAD) in the enzyme by reduced nicotinamide adenine dinucleotide phosphate (NADPH) in response to binding p-hydroxybenzoate to the enzyme and oxidation of reduced FAD with oxygen to form a hydroperoxide, which then oxygenates p-hydroxybenzoate. The protein is p-hydroxybenzoate hydroxylase (pobA) of Pseudomonas fluorescens.